Consider the following 514-residue polypeptide: 2,3-bisphosphoglycerate-independent phosphoglycerate mutase (514 aa).

Mn(2+)-binding residues include Asp14 and Ser64. Residue Ser64 is the Phosphoserine intermediate of the active site. Substrate-binding positions include His125, 155-156, Arg187, Arg193, 263-266, and Lys336; these read RD and RADR. Mn(2+) contacts are provided by Asp403, His407, Asp444, His445, and His463.

It belongs to the BPG-independent phosphoglycerate mutase family. In terms of assembly, monomer. It depends on Mn(2+) as a cofactor.

It carries out the reaction (2R)-2-phosphoglycerate = (2R)-3-phosphoglycerate. It participates in carbohydrate degradation; glycolysis; pyruvate from D-glyceraldehyde 3-phosphate: step 3/5. Functionally, catalyzes the interconversion of 2-phosphoglycerate and 3-phosphoglycerate. This is 2,3-bisphosphoglycerate-independent phosphoglycerate mutase from Salmonella typhi.